The following is a 247-amino-acid chain: tRNA uridine(34) hydroxylase (247 aa).

The 95-residue stretch at 124 to 218 folds into the Rhodanese domain; it reads TKQDVIVIDT…YLEDTQNKNN (95 aa). The Cysteine persulfide intermediate role is filled by Cys-178.

This sequence belongs to the TrhO family.

It carries out the reaction uridine(34) in tRNA + AH2 + O2 = 5-hydroxyuridine(34) in tRNA + A + H2O. Catalyzes oxygen-dependent 5-hydroxyuridine (ho5U) modification at position 34 in tRNAs. This is tRNA uridine(34) hydroxylase from Rickettsia rickettsii (strain Iowa).